The chain runs to 297 residues: Homoserine kinase (297 aa).

ATP is bound at residue 82-92; that stretch reads PVSRGLGSSAA.

The protein belongs to the GHMP kinase family. Homoserine kinase subfamily.

Its subcellular location is the cytoplasm. The enzyme catalyses L-homoserine + ATP = O-phospho-L-homoserine + ADP + H(+). Its pathway is amino-acid biosynthesis; L-threonine biosynthesis; L-threonine from L-aspartate: step 4/5. Functionally, catalyzes the ATP-dependent phosphorylation of L-homoserine to L-homoserine phosphate. This chain is Homoserine kinase, found in Clostridium botulinum (strain Kyoto / Type A2).